Consider the following 123-residue polypeptide: Unknown 12C protein (123 aa).

The N-terminal stretch at 1–17 is a signal peptide; the sequence is MMSALFLVLSVSLLVSG.

In terms of processing, contains 6 disulfide bonds. In terms of tissue distribution, expressed in acontia, a specialised envenomation structure laden with batteries of venom-containing nematocysts found only in the superfamily Metridioidea.

It localises to the secreted. It is found in the nematocyst. In terms of biological role, cysteine-rich protein with probable toxin activity. This Calliactis polypus (Hermit crab anemone) protein is Unknown 12C protein.